A 300-amino-acid chain; its full sequence is Bifunctional protein FolD 2 (300 aa).

NADP(+)-binding positions include 165–167 (GRS), Ser-190, and Ile-231.

Belongs to the tetrahydrofolate dehydrogenase/cyclohydrolase family. As to quaternary structure, homodimer.

It carries out the reaction (6R)-5,10-methylene-5,6,7,8-tetrahydrofolate + NADP(+) = (6R)-5,10-methenyltetrahydrofolate + NADPH. The enzyme catalyses (6R)-5,10-methenyltetrahydrofolate + H2O = (6R)-10-formyltetrahydrofolate + H(+). It functions in the pathway one-carbon metabolism; tetrahydrofolate interconversion. Its function is as follows. Catalyzes the oxidation of 5,10-methylenetetrahydrofolate to 5,10-methenyltetrahydrofolate and then the hydrolysis of 5,10-methenyltetrahydrofolate to 10-formyltetrahydrofolate. The protein is Bifunctional protein FolD 2 of Pseudomonas syringae pv. syringae (strain B728a).